The sequence spans 465 residues: Chromosomal replication initiator protein DnaA (465 aa).

Residues 1-87 (MLWTDCLTRL…RPGSILSSSE (87 aa)) form a domain I, interacts with DnaA modulators region. Residues 81–123 (SILSSSEQPATTTAALQTAPIPQPAKGKREPEPVANTAVSSKS) are disordered. Low complexity predominate over residues 88–100 (QPATTTAALQTAP). The interval 88-127 (QPATTTAALQTAPIPQPAKGKREPEPVANTAVSSKSSKKK) is domain II. The interval 128–345 (LLNPQFTFSL…GALNKVVAIS (218 aa)) is domain III, AAA+ region. Residues Gly-173, Gly-175, Lys-176, and Thr-177 each coordinate ATP. Residues 346–465 (RFKGAPIDLD…YKNLLRLLQS (120 aa)) are domain IV, binds dsDNA.

Belongs to the DnaA family. In terms of assembly, oligomerizes as a right-handed, spiral filament on DNA at oriC.

It localises to the cytoplasm. Plays an essential role in the initiation and regulation of chromosomal replication. ATP-DnaA binds to the origin of replication (oriC) to initiate formation of the DNA replication initiation complex once per cell cycle. Binds the DnaA box (a 9 base pair repeat at the origin) and separates the double-stranded (ds)DNA. Forms a right-handed helical filament on oriC DNA; dsDNA binds to the exterior of the filament while single-stranded (ss)DNA is stabiized in the filament's interior. The ATP-DnaA-oriC complex binds and stabilizes one strand of the AT-rich DNA unwinding element (DUE), permitting loading of DNA polymerase. After initiation quickly degrades to an ADP-DnaA complex that is not apt for DNA replication. Binds acidic phospholipids. This is Chromosomal replication initiator protein DnaA from Acinetobacter baumannii (strain SDF).